The sequence spans 57 residues: Large ribosomal subunit protein bL33 (57 aa).

Belongs to the bacterial ribosomal protein bL33 family.

The polypeptide is Large ribosomal subunit protein bL33 (Bifidobacterium longum (strain NCC 2705)).